The primary structure comprises 783 residues: Lon protease (783 aa).

A Lon N-terminal domain is found at 16 to 210; it reads LPLLASRGVV…KLLEIIKDEI (195 aa). Residue 361–368 coordinates ATP; that stretch reads GAPGVGKT. Residues 597 to 778 form the Lon proteolytic domain; sequence KDRVGVATGM…DQVLDLILGG (182 aa). Residues Ser684 and Lys727 contribute to the active site.

It belongs to the peptidase S16 family. In terms of assembly, homohexamer. Organized in a ring with a central cavity.

It is found in the cytoplasm. The enzyme catalyses Hydrolysis of proteins in presence of ATP.. ATP-dependent serine protease that mediates the selective degradation of mutant and abnormal proteins as well as certain short-lived regulatory proteins. Required for cellular homeostasis and for survival from DNA damage and developmental changes induced by stress. Degrades polypeptides processively to yield small peptide fragments that are 5 to 10 amino acids long. Binds to DNA in a double-stranded, site-specific manner. The polypeptide is Lon protease (Halothermothrix orenii (strain H 168 / OCM 544 / DSM 9562)).